We begin with the raw amino-acid sequence, 468 residues long: ATP synthase subunit beta (468 aa).

ATP is bound at residue 155-162 (GGAGVGKT).

Belongs to the ATPase alpha/beta chains family. In terms of assembly, F-type ATPases have 2 components, CF(1) - the catalytic core - and CF(0) - the membrane proton channel. CF(1) has five subunits: alpha(3), beta(3), gamma(1), delta(1), epsilon(1). CF(0) has three main subunits: a(1), b(2) and c(9-12). The alpha and beta chains form an alternating ring which encloses part of the gamma chain. CF(1) is attached to CF(0) by a central stalk formed by the gamma and epsilon chains, while a peripheral stalk is formed by the delta and b chains.

The protein localises to the cell membrane. The catalysed reaction is ATP + H2O + 4 H(+)(in) = ADP + phosphate + 5 H(+)(out). Functionally, produces ATP from ADP in the presence of a proton gradient across the membrane. The catalytic sites are hosted primarily by the beta subunits. This chain is ATP synthase subunit beta, found in Streptococcus pyogenes serotype M1.